The following is a 1723-amino-acid chain: Probable outer membrane protein pmp20 (1723 aa).

An N-terminal signal peptide occupies residues 1 to 21 (MKWLPATAVFAAVLPALTAFG). Disordered regions lie at residues 78-100 (VTPD…SGAT) and 139-161 (LSSS…SASA). Composition is skewed to low complexity over residues 85 to 100 (SSSN…SGAT) and 140 to 161 (SSSS…SASA). In terms of domain architecture, Autotransporter spans 1434–1723 (EDPAFNNFWA…MANGGIRFVF (290 aa)).

The protein belongs to the PMP outer membrane protein family.

Its subcellular location is the secreted. It is found in the cell wall. The protein localises to the cell outer membrane. The protein is Probable outer membrane protein pmp20 (pmp20) of Chlamydia pneumoniae (Chlamydophila pneumoniae).